Here is a 248-residue protein sequence, read N- to C-terminus: Large ribosomal subunit protein uL4 (248 aa).

2 disordered regions span residues 72 to 103 (RSEN…KSLN) and 173 to 210 (GRSV…RNLS). Over residues 92 to 103 (PKAEKDQTKSLN) the composition is skewed to basic and acidic residues. Over residues 177 to 189 (RAGRGKTRGRKYS) the composition is skewed to basic residues.

This sequence belongs to the universal ribosomal protein uL4 family. In terms of assembly, part of the 50S ribosomal subunit.

Functionally, one of the primary rRNA binding proteins, this protein initially binds near the 5'-end of the 23S rRNA. It is important during the early stages of 50S assembly. It makes multiple contacts with different domains of the 23S rRNA in the assembled 50S subunit and ribosome. In terms of biological role, forms part of the polypeptide exit tunnel. The chain is Large ribosomal subunit protein uL4 from Halorubrum lacusprofundi (strain ATCC 49239 / DSM 5036 / JCM 8891 / ACAM 34).